The sequence spans 425 residues: Dihydroorotase (425 aa).

2 residues coordinate Zn(2+): His58 and His60. Substrate-binding positions include 60–62 (HFR) and Asn92. Zn(2+) contacts are provided by Asp150, His177, and His230. Asn276 serves as a coordination point for substrate. Asp303 serves as a coordination point for Zn(2+). Asp303 is an active-site residue. Substrate-binding positions include His307 and 321-322 (FG).

Belongs to the metallo-dependent hydrolases superfamily. DHOase family. Class I DHOase subfamily. It depends on Zn(2+) as a cofactor.

It carries out the reaction (S)-dihydroorotate + H2O = N-carbamoyl-L-aspartate + H(+). It functions in the pathway pyrimidine metabolism; UMP biosynthesis via de novo pathway; (S)-dihydroorotate from bicarbonate: step 3/3. Functionally, catalyzes the reversible cyclization of carbamoyl aspartate to dihydroorotate. The sequence is that of Dihydroorotase from Pediococcus pentosaceus (strain ATCC 25745 / CCUG 21536 / LMG 10740 / 183-1w).